Reading from the N-terminus, the 143-residue chain is MQLNDLRSAPGARREKHRPGRGIGSGLGKTGGRGHKGQTSRSGGSIAPGFEGGQQPLHRRLPKFGFVSLKAMDRAEVRTSELNKLEGVVTLQALKDANLVGQHVQRVKVMLSGEVTRAVTLKGIAATKGARAAIEAAGGKFED.

A disordered region spans residues 1-58; sequence MQLNDLRSAPGARREKHRPGRGIGSGLGKTGGRGHKGQTSRSGGSIAPGFEGGQQPLH. The span at 21-31 shows a compositional bias: gly residues; the sequence is RGIGSGLGKTG.

This sequence belongs to the universal ribosomal protein uL15 family. Part of the 50S ribosomal subunit.

In terms of biological role, binds to the 23S rRNA. The polypeptide is Large ribosomal subunit protein uL15 (Ectopseudomonas mendocina (strain ymp) (Pseudomonas mendocina)).